The primary structure comprises 525 residues: Arylsulfatase G (525 aa).

A signal peptide spans 1-16 (MGWLFLKVLLVGMAFS). The Ca(2+) site is built by Asp44, Asp45, and Cys84. Cys84 (nucleophile) is an active-site residue. Cys84 is subject to 3-oxoalanine (Cys). The N-linked (GlcNAc...) asparagine glycan is linked to Asn117. A substrate-binding site is contributed by Lys137. Residue His139 is part of the active site. Ser162 contributes to the substrate binding site. An N-linked (GlcNAc...) asparagine glycan is attached at Asn215. His251 serves as a coordination point for substrate. 2 residues coordinate Ca(2+): Asp302 and Asn303. N-linked (GlcNAc...) asparagine glycans are attached at residues Asn356 and Asn497.

The protein belongs to the sulfatase family. The cofactor is Ca(2+). Post-translationally, N-glycosylated with both high mannose and complex type sugars. The conversion to 3-oxoalanine (also known as C-formylglycine, FGly), of a serine or cysteine residue in prokaryotes and of a cysteine residue in eukaryotes, is critical for catalytic activity. In terms of processing, the 63-kDa precursor undergoes proteolytic processing in two steps, yielding two fragments in the first step (apparent molecular masses of 44 and 18 kDa). In the second step, the 44-kDa fragment is processed further to the 34- and 10-kDa chains. The 10-kDa chain is a cleavage product of the 44-kDa fragment but linked to the 18-kDa chain through a disulfide bridge. In terms of tissue distribution, highly expressed in the spleen, kidney, liver, brain, and testis (at protein level).

It is found in the lysosome. It carries out the reaction an aryl sulfate + H2O = a phenol + sulfate + H(+). The catalysed reaction is Hydrolysis of the 3-sulfate groups of the N-sulfo-D-glucosamine 3-O-sulfate units of heparin.. Its function is as follows. Displays arylsulfatase activity at acidic pH towards the artificial substrate p-nitrocatechol sulfate. Catalyzes the hydrolysis of the 3-sulfate groups of the N-sulfo-D-glucosamine 3-O-sulfate units of heparin. The chain is Arylsulfatase G (Arsg) from Mus musculus (Mouse).